We begin with the raw amino-acid sequence, 865 residues long: FO synthase (865 aa).

The disordered stretch occupies residues 1 to 21; sequence MIEGVTELATPNVPPAPPSPS. 2 Radical SAM core domains span residues 76–320 and 544–785; these read ITYS…LGPD and VTYV…DNIQ. The segment at 77-409 is cofG-like; the sequence is TYSRNVFIPL…PRIGAHVAAL (333 aa). Residues C90, C94, C97, C558, C562, and C565 each coordinate [4Fe-4S] cluster. Residues 521-854 are cofH-like; that stretch reads DGAELDAVAA…RERTTVYGRV (334 aa).

In the N-terminal section; belongs to the radical SAM superfamily. CofG family. This sequence in the C-terminal section; belongs to the radical SAM superfamily. CofH family. [4Fe-4S] cluster serves as cofactor.

It catalyses the reaction 5-amino-6-(D-ribitylamino)uracil + L-tyrosine + S-adenosyl-L-methionine = 5-amino-5-(4-hydroxybenzyl)-6-(D-ribitylimino)-5,6-dihydrouracil + 2-iminoacetate + 5'-deoxyadenosine + L-methionine + H(+). It carries out the reaction 5-amino-5-(4-hydroxybenzyl)-6-(D-ribitylimino)-5,6-dihydrouracil + S-adenosyl-L-methionine = 7,8-didemethyl-8-hydroxy-5-deazariboflavin + 5'-deoxyadenosine + L-methionine + NH4(+) + H(+). Its pathway is cofactor biosynthesis; coenzyme F0 biosynthesis. Functionally, catalyzes the radical-mediated synthesis of 7,8-didemethyl-8-hydroxy-5-deazariboflavin (FO) from 5-amino-6-(D-ribitylamino)uracil and L-tyrosine. This is FO synthase (fbiC) from Nocardia farcinica (strain IFM 10152).